Consider the following 155-residue polypeptide: 6,7-dimethyl-8-ribityllumazine synthase (155 aa).

5-amino-6-(D-ribitylamino)uracil contacts are provided by residues phenylalanine 23, 57 to 59 (AFE), and 81 to 83 (AVI). (2S)-2-hydroxy-3-oxobutyl phosphate is bound at residue 86–87 (ST). The active-site Proton donor is histidine 89. Residue phenylalanine 114 coordinates 5-amino-6-(D-ribitylamino)uracil. Arginine 128 provides a ligand contact to (2S)-2-hydroxy-3-oxobutyl phosphate.

It belongs to the DMRL synthase family.

It catalyses the reaction (2S)-2-hydroxy-3-oxobutyl phosphate + 5-amino-6-(D-ribitylamino)uracil = 6,7-dimethyl-8-(1-D-ribityl)lumazine + phosphate + 2 H2O + H(+). The protein operates within cofactor biosynthesis; riboflavin biosynthesis; riboflavin from 2-hydroxy-3-oxobutyl phosphate and 5-amino-6-(D-ribitylamino)uracil: step 1/2. In terms of biological role, catalyzes the formation of 6,7-dimethyl-8-ribityllumazine by condensation of 5-amino-6-(D-ribitylamino)uracil with 3,4-dihydroxy-2-butanone 4-phosphate. This is the penultimate step in the biosynthesis of riboflavin. The chain is 6,7-dimethyl-8-ribityllumazine synthase from Citrifermentans bemidjiense (strain ATCC BAA-1014 / DSM 16622 / JCM 12645 / Bem) (Geobacter bemidjiensis).